The chain runs to 275 residues: Glutamate racemase (275 aa).

Substrate-binding positions include 22-23 (DS) and 54-55 (YG). Cysteine 85 acts as the Proton donor/acceptor in catalysis. Residue 86–87 (NT) participates in substrate binding. The active-site Proton donor/acceptor is cysteine 196. 197-198 (TH) is a substrate binding site.

This sequence belongs to the aspartate/glutamate racemases family.

It carries out the reaction L-glutamate = D-glutamate. It participates in cell wall biogenesis; peptidoglycan biosynthesis. In terms of biological role, provides the (R)-glutamate required for cell wall biosynthesis. This is Glutamate racemase from Pseudomonas syringae pv. tomato (strain ATCC BAA-871 / DC3000).